Here is a 305-residue protein sequence, read N- to C-terminus: Acetaldehyde dehydrogenase (305 aa).

13-16 (SGNI) is a binding site for NAD(+). The active-site Acyl-thioester intermediate is the cysteine 128. Residues 159 to 167 (SAGPGTRQN) and asparagine 278 each bind NAD(+).

This sequence belongs to the acetaldehyde dehydrogenase family.

The catalysed reaction is acetaldehyde + NAD(+) + CoA = acetyl-CoA + NADH + H(+). The sequence is that of Acetaldehyde dehydrogenase from Roseiflexus castenholzii (strain DSM 13941 / HLO8).